A 398-amino-acid chain; its full sequence is Enoyl-[acyl-carrier-protein] reductase [NADH] (398 aa).

NAD(+) is bound by residues 48–53 (GASTGY), 74–75 (FE), 111–112 (DA), and 139–140 (LA). Residue Y225 coordinates substrate. Catalysis depends on Y235, which acts as the Proton donor. NAD(+) contacts are provided by residues K244 and 273–275 (VVT).

The protein belongs to the TER reductase family. Monomer.

The enzyme catalyses a 2,3-saturated acyl-[ACP] + NAD(+) = a (2E)-enoyl-[ACP] + NADH + H(+). The protein operates within lipid metabolism; fatty acid biosynthesis. Its function is as follows. Involved in the final reduction of the elongation cycle of fatty acid synthesis (FAS II). Catalyzes the reduction of a carbon-carbon double bond in an enoyl moiety that is covalently linked to an acyl carrier protein (ACP). The sequence is that of Enoyl-[acyl-carrier-protein] reductase [NADH] from Pseudomonas fluorescens (strain ATCC BAA-477 / NRRL B-23932 / Pf-5).